Reading from the N-terminus, the 379-residue chain is Chaperone protein DnaJ (379 aa).

A J domain is found at 5-71; the sequence is DYYEILGVSR…EKRAMYDRFG (67 aa). The CR-type zinc finger occupies 149-231; the sequence is GTTIPIEYDR…CGGSGRIRKR (83 aa). Residues Cys162, Cys165, Cys179, Cys182, Cys205, Cys208, Cys219, and Cys222 each contribute to the Zn(2+) site. 4 CXXCXGXG motif repeats span residues 162–169, 179–186, 205–212, and 219–226; these read CSHCNGEG, CPKCHGTG, CNQCGGTG, and CHVCGGSG.

It belongs to the DnaJ family. In terms of assembly, homodimer. The cofactor is Zn(2+).

It is found in the cytoplasm. Functionally, participates actively in the response to hyperosmotic and heat shock by preventing the aggregation of stress-denatured proteins and by disaggregating proteins, also in an autonomous, DnaK-independent fashion. Unfolded proteins bind initially to DnaJ; upon interaction with the DnaJ-bound protein, DnaK hydrolyzes its bound ATP, resulting in the formation of a stable complex. GrpE releases ADP from DnaK; ATP binding to DnaK triggers the release of the substrate protein, thus completing the reaction cycle. Several rounds of ATP-dependent interactions between DnaJ, DnaK and GrpE are required for fully efficient folding. Also involved, together with DnaK and GrpE, in the DNA replication of plasmids through activation of initiation proteins. The chain is Chaperone protein DnaJ from Thermosipho africanus (strain TCF52B).